We begin with the raw amino-acid sequence, 584 residues long: A-type ATP synthase subunit A (584 aa).

Residue 234–241 coordinates ATP; the sequence is GPFGSGKT.

It belongs to the ATPase alpha/beta chains family. Has multiple subunits with at least A(3), B(3), C, D, E, F, H, I and proteolipid K(x).

It is found in the cell membrane. It catalyses the reaction ATP + H2O + 4 H(+)(in) = ADP + phosphate + 5 H(+)(out). Its function is as follows. Component of the A-type ATP synthase that produces ATP from ADP in the presence of a proton gradient across the membrane. The A chain is the catalytic subunit. In Methanoculleus marisnigri (strain ATCC 35101 / DSM 1498 / JR1), this protein is A-type ATP synthase subunit A.